The following is a 128-amino-acid chain: Aspartate 1-decarboxylase (128 aa).

Catalysis depends on S25, which acts as the Schiff-base intermediate with substrate; via pyruvic acid. S25 bears the Pyruvic acid (Ser) mark. T57 provides a ligand contact to substrate. Y58 acts as the Proton donor in catalysis. G73–A75 lines the substrate pocket.

Belongs to the PanD family. Heterooctamer of four alpha and four beta subunits. Requires pyruvate as cofactor. Is synthesized initially as an inactive proenzyme, which is activated by self-cleavage at a specific serine bond to produce a beta-subunit with a hydroxyl group at its C-terminus and an alpha-subunit with a pyruvoyl group at its N-terminus.

It localises to the cytoplasm. It carries out the reaction L-aspartate + H(+) = beta-alanine + CO2. Its pathway is cofactor biosynthesis; (R)-pantothenate biosynthesis; beta-alanine from L-aspartate: step 1/1. Functionally, catalyzes the pyruvoyl-dependent decarboxylation of aspartate to produce beta-alanine. The chain is Aspartate 1-decarboxylase from Moorella thermoacetica (strain ATCC 39073 / JCM 9320).